The chain runs to 284 residues: Shikimate dehydrogenase (NADP(+)) (284 aa).

Shikimate is bound by residues 20 to 22 (SIS) and S67. The active-site Proton acceptor is the K71. Residue D83 coordinates NADP(+). Shikimate is bound by residues N92 and D107. Residues 129–133 (GAGGA) and I227 each bind NADP(+). Y229 serves as a coordination point for shikimate. Position 250 (G250) interacts with NADP(+).

This sequence belongs to the shikimate dehydrogenase family. In terms of assembly, homodimer.

It catalyses the reaction shikimate + NADP(+) = 3-dehydroshikimate + NADPH + H(+). Its pathway is metabolic intermediate biosynthesis; chorismate biosynthesis; chorismate from D-erythrose 4-phosphate and phosphoenolpyruvate: step 4/7. In terms of biological role, involved in the biosynthesis of the chorismate, which leads to the biosynthesis of aromatic amino acids. Catalyzes the reversible NADPH linked reduction of 3-dehydroshikimate (DHSA) to yield shikimate (SA). The sequence is that of Shikimate dehydrogenase (NADP(+)) from Streptococcus pneumoniae serotype 2 (strain D39 / NCTC 7466).